The primary structure comprises 599 residues: Fumarate reductase flavoprotein subunit (599 aa).

Residues 12-16, 36-38, 44-52, 156-158, and aspartate 212 each bind FAD; these read GAGGG, VSK, THTVAAEGG, and HFV. A Tele-8alpha-FAD histidine modification is found at histidine 45. Active-site residues include histidine 233 and arginine 249. Residues 357-358, glutamate 381, and 392-398 contribute to the FAD site; these read HY and RLGSNSL.

Belongs to the FAD-dependent oxidoreductase 2 family. FRD/SDH subfamily. Part of an enzyme complex containing four subunits: a flavoprotein (FrdA), an iron-sulfur protein (FrdB), and two hydrophobic anchor proteins (FrdC and FrdD). It depends on FAD as a cofactor.

It is found in the cell inner membrane. The enzyme catalyses a quinone + succinate = fumarate + a quinol. It carries out the reaction a menaquinone + succinate = a menaquinol + fumarate. The chain is Fumarate reductase flavoprotein subunit (frdA) from Haemophilus influenzae (strain ATCC 51907 / DSM 11121 / KW20 / Rd).